We begin with the raw amino-acid sequence, 280 residues long: Chlorophyll a-b binding protein CP26, chloroplastic (280 aa).

The N-terminal 48 residues, 1 to 48 (MASLGVSEMLGTPLNFRAVSRSSAPLASSPSTFKTVALFSKKKPAPAK), are a transit peptide targeting the chloroplast. Chlorophyll b is bound at residue F70. Positions 95, 114, and 117 each coordinate chlorophyll a. The next 2 membrane-spanning stretches (helical) occupy residues 110–130 (YQAF…GFII) and 167–187 (IPIN…GAEY). Residues R119, I167, E186, and R189 each coordinate chlorophyll b. Positions 224, 225, 228, 230, 242, and 257 each coordinate chlorophyll a. A helical membrane pass occupies residues 231 to 251 (LAMFAMLGFFIQAYVTGEGPV).

The protein belongs to the light-harvesting chlorophyll a/b-binding (LHC) protein family. Forms heterotrimers with LHCB3. The LHC complex consists of chlorophyll a-b binding proteins. Binds at least 14 chlorophylls (8 Chl-a and 6 Chl-b) and carotenoids such as lutein and neoxanthin. serves as cofactor. Post-translationally, photoregulated by reversible phosphorylation of its threonine residues.

The protein localises to the plastid. Its subcellular location is the chloroplast thylakoid membrane. In terms of biological role, the light-harvesting complex (LHC) functions as a light receptor, it captures and delivers excitation energy to photosystems with which it is closely associated. The sequence is that of Chlorophyll a-b binding protein CP26, chloroplastic (LHCB5) from Arabidopsis thaliana (Mouse-ear cress).